A 192-amino-acid polypeptide reads, in one-letter code: Adenylate kinase (192 aa).

Residue 10–18 participates in ATP binding; that stretch reads GVPGVGSTT.

Belongs to the archaeal adenylate kinase family. Monomer.

The protein resides in the cytoplasm. The catalysed reaction is AMP + ATP = 2 ADP. The protein is Adenylate kinase (adkA) of Methanocaldococcus jannaschii (strain ATCC 43067 / DSM 2661 / JAL-1 / JCM 10045 / NBRC 100440) (Methanococcus jannaschii).